We begin with the raw amino-acid sequence, 590 residues long: Histone-binding protein N1/N2 (590 aa).

The segment at 1-30 (MAEETAALSTEKTEDTSTAPSTSAEKADGI) is disordered. One copy of the TPR 1 repeat lies at 36–69 (AKRLMGAGQKHLVMKDVRSAVNLFQEASSLLAKQ). The interval 102-328 (ALEGMPEDDE…EKETEEEDVG (227 aa)) is disordered. The segment covering 106 to 120 (MPEDDEEEAEKEEDP) has biased composition (acidic residues). Composition is skewed to basic and acidic residues over residues 128-250 (LDEK…DAKE) and 262-275 (AEEK…ESKE). The segment covering 293–327 (EKMEEEEEGEDSEENEDGTEENEGTEEKETEEEDV) has biased composition (acidic residues). TPR repeat units follow at residues 357–390 (AQAH…QKEH) and 399–432 (AETH…IEKR). Residues 492–590 (GGSSGFSKEN…METATVESTA (99 aa)) form a disordered region. Positions 496 to 525 (GFSKENGSTSSSSAVEKSGDSTVPVTNCVS) are enriched in polar residues. Residues 531 to 537 (VRKKRKT) carry the Nuclear localization signal motif. Positions 536–553 (KTEEESPLKDKDAKKSKQ) are enriched in basic and acidic residues.

The protein belongs to the NASP family.

The protein resides in the nucleus. In terms of biological role, this protein is involved in nucleosome assembly. It is bound to H3 and H4 in the absence of DNA, but released from H3 and H4 in the presence of DNA. This Xenopus laevis (African clawed frog) protein is Histone-binding protein N1/N2.